An 899-amino-acid polypeptide reads, in one-letter code: Origin recognition complex subunit 5 (899 aa).

Disordered regions lie at residues 27-47 (FSSP…NDDT), 100-166 (DRIN…EYKD), and 194-238 (KNLE…DGNL). Residues 105–160 (SEEETNINDDNNDDNNGDYDDDNNSDDDDDNDDNNNNDDNNNDDDEDVDDFEDIKE) show a composition bias toward acidic residues. Low complexity predominate over residues 207 to 218 (SSDNSMTSSSEE). Positions 227 to 237 (ESDKESDKDGN) are enriched in basic and acidic residues. 303–310 (GLPGMGKT) lines the ATP pocket. Positions 409 to 469 (KRTTENIRSP…NNNSNNVRFN (61 aa)) are disordered. Residues 455 to 469 (KNNFNNNNSNNVRFN) are compositionally biased toward low complexity.

Belongs to the ORC5 family. As to quaternary structure, component of the origin recognition complex (ORC). Interacts with PCNA1; the interaction occurs during the trophozoite stage but not at the late schizont stage.

The protein resides in the nucleus. The catalysed reaction is ATP + H2O = ADP + phosphate + H(+). Its function is as follows. Component of the origin recognition complex (ORC) that binds origins of replication. This chain is Origin recognition complex subunit 5, found in Plasmodium falciparum (isolate 3D7).